Consider the following 102-residue polypeptide: Large ribosomal subunit protein bL21 (102 aa).

This sequence belongs to the bacterial ribosomal protein bL21 family. Part of the 50S ribosomal subunit. Contacts protein L20.

Its function is as follows. This protein binds to 23S rRNA in the presence of protein L20. The chain is Large ribosomal subunit protein bL21 from Bacillus cytotoxicus (strain DSM 22905 / CIP 110041 / 391-98 / NVH 391-98).